The sequence spans 103 residues: PTS system lactose-specific EIIA component (103 aa).

A PTS EIIA type-3 domain is found at 1–102 (MNREEVQLLG…MKHLLEFYKR (102 aa)). The active-site Tele-phosphohistidine intermediate is the His-78. At His-78 the chain carries Phosphohistidine; by HPr. Mg(2+) is bound at residue Asp-81.

In terms of assembly, homotrimer. Mg(2+) serves as cofactor.

The protein localises to the cytoplasm. Its function is as follows. The phosphoenolpyruvate-dependent sugar phosphotransferase system (sugar PTS), a major carbohydrate active transport system, catalyzes the phosphorylation of incoming sugar substrates concomitantly with their translocation across the cell membrane. The enzyme II LacEF PTS system is involved in lactose transport. This chain is PTS system lactose-specific EIIA component, found in Staphylococcus aureus (strain COL).